The primary structure comprises 196 residues: Peptide methionine sulfoxide reductase MsrA 2 (196 aa).

Cys-36 is a catalytic residue.

Belongs to the MsrA Met sulfoxide reductase family.

It catalyses the reaction L-methionyl-[protein] + [thioredoxin]-disulfide + H2O = L-methionyl-(S)-S-oxide-[protein] + [thioredoxin]-dithiol. The catalysed reaction is [thioredoxin]-disulfide + L-methionine + H2O = L-methionine (S)-S-oxide + [thioredoxin]-dithiol. Functionally, has an important function as a repair enzyme for proteins that have been inactivated by oxidation. Catalyzes the reversible oxidation-reduction of methionine sulfoxide in proteins to methionine. This is Peptide methionine sulfoxide reductase MsrA 2 (msrA2) from Caulobacter vibrioides (strain ATCC 19089 / CIP 103742 / CB 15) (Caulobacter crescentus).